The primary structure comprises 126 residues: Protein ApaG (126 aa).

One can recognise an ApaG domain in the interval 2–126; that stretch reads KQLESSIRIE…FRLAAPGLLH (125 aa).

This is Protein ApaG from Shewanella loihica (strain ATCC BAA-1088 / PV-4).